Consider the following 300-residue polypeptide: Ubiquinone biosynthesis protein COQ4, mitochondrial (300 aa).

4 residues coordinate Zn(2+): histidine 173, aspartate 174, histidine 177, and glutamate 189.

This sequence belongs to the COQ4 family. In terms of assembly, component of a multi-subunit COQ enzyme complex, composed of at least COQ3, COQ4, COQ5, COQ6, COQ7 and COQ9. Zn(2+) serves as cofactor.

Its subcellular location is the mitochondrion inner membrane. The enzyme catalyses a 4-hydroxy-3-methoxy-5-(all-trans-polyprenyl)benzoate + H(+) = a 2-methoxy-6-(all-trans-polyprenyl)phenol + CO2. Its pathway is cofactor biosynthesis; ubiquinone biosynthesis. In terms of biological role, lyase that catalyzes the C1-decarboxylation of 4-hydroxy-3-methoxy-5-(all-trans-polyprenyl)benzoic acid into 2-methoxy-6-(all-trans-polyprenyl)phenol during ubiquinone biosynthesis. This Cryptococcus neoformans var. neoformans serotype D (strain JEC21 / ATCC MYA-565) (Filobasidiella neoformans) protein is Ubiquinone biosynthesis protein COQ4, mitochondrial.